Reading from the N-terminus, the 228-residue chain is Ureidoacrylate amidohydrolase RutB (228 aa).

Catalysis depends on Asp-23, which acts as the Proton acceptor. Residue Lys-132 is part of the active site. Cys-165 (nucleophile) is an active-site residue.

This sequence belongs to the isochorismatase family. RutB subfamily.

The catalysed reaction is (Z)-3-ureidoacrylate + H2O + H(+) = (Z)-3-aminoacrylate + NH4(+) + CO2. It catalyses the reaction (Z)-3-ureidoacrylate + H2O = (Z)-3-aminoacrylate + carbamate + H(+). The enzyme catalyses (Z)-2-methylureidoacrylate + H2O + H(+) = (Z)-2-methylaminoacrylate + NH4(+) + CO2. Functionally, hydrolyzes ureidoacrylate to form aminoacrylate and carbamate. The carbamate hydrolyzes spontaneously, thereby releasing one of the nitrogen atoms of the pyrimidine ring as ammonia and one of its carbon atoms as CO2. The protein is Ureidoacrylate amidohydrolase RutB of Agrobacterium fabrum (strain C58 / ATCC 33970) (Agrobacterium tumefaciens (strain C58)).